The sequence spans 272 residues: HMP-PP phosphatase (272 aa).

The active-site Nucleophile is the aspartate 8. The Mg(2+) site is built by aspartate 8, aspartate 10, and aspartate 212.

This sequence belongs to the HAD-like hydrolase superfamily. Cof family. Mg(2+) serves as cofactor.

It catalyses the reaction 4-amino-2-methyl-5-(diphosphooxymethyl)pyrimidine + H2O = 4-amino-2-methyl-5-(phosphooxymethyl)pyrimidine + phosphate + H(+). Its function is as follows. Catalyzes the hydrolysis of 4-amino-2-methyl-5-hydroxymethylpyrimidine pyrophosphate (HMP-PP) to 4-amino-2-methyl-5-hydroxymethylpyrimidine phosphate (HMP-P). This chain is HMP-PP phosphatase, found in Escherichia coli O6:H1 (strain CFT073 / ATCC 700928 / UPEC).